The following is a 256-amino-acid chain: MLILLSCAKTIGIPKRLPSHLTTTSPIFDEQTTKIALAASSCDIKELSRLLRINRKLAEENHRRWQHFFEDDSPTAPAALAYTGMVFKKLAPANFNADDWLYASEHLLITSFLYGLLRPSDMIRPYRMEGFAHLGAPVEDEVFNFWRPYLTDFLIEKVREKGGELCFLASEEMKMLFDWKRVEQAVRVVTPLFKVPQPDGGLKQIVIYTKMARGLMTAHLLTRRCRHVEEMQLFSPEGFIFRPELSDESNYLFVME.

The protein belongs to the UPF0246 family.

The polypeptide is UPF0246 protein PG_1544 (Porphyromonas gingivalis (strain ATCC BAA-308 / W83)).